A 249-amino-acid chain; its full sequence is Undecaprenyl-diphosphatase (249 aa).

Transmembrane regions (helical) follow at residues 11-31, 35-55, 74-94, 101-121, 135-155, 175-195, 208-228, and 229-249; these read GLTE…TAIF, PDVG…VIFV, ITLS…GIFF, IFSE…FMLL, IPYL…LPGI, AVKY…VLEM, FIVA…MVIA, and GKLK…IFYI.

Belongs to the UppP family.

The protein resides in the cell membrane. The catalysed reaction is di-trans,octa-cis-undecaprenyl diphosphate + H2O = di-trans,octa-cis-undecaprenyl phosphate + phosphate + H(+). In terms of biological role, catalyzes the dephosphorylation of undecaprenyl diphosphate (UPP). The chain is Undecaprenyl-diphosphatase from Methanococcus vannielii (strain ATCC 35089 / DSM 1224 / JCM 13029 / OCM 148 / SB).